Reading from the N-terminus, the 914-residue chain is MVQRMWAEAAGPAGGAEPLFPGSRRSRSVWDAVRLEVGVPDSCPVVLHSFTQLDPDLPRPESSTQEIGEELINGVIYSISLRKVQLHHGGNKGQRWLGYENESALNLYETCKVRTVKAGTLEKLVEHLVPAFQGSDLSYVTIFLCTYRAFTTTQQVLDLLFKRYGRCDALTASSRYGCILPYSDEDGGPQDQLKNAISSILGTWLDQYSEDFCQPPDFPCLKQLVAYVQLNMPGSDLERRAHLLLAQLEHSEPIEAEPEALSPVPALKPTPELELALTPARAPSPVPAPAPEPEPAPTPAPGSELEVAPAPAPELQQAPEPAVGLESAPAPALELEPAPEQDPAPSQTLELEPAPAPVPSLQPSWPSPVVAENGLSEEKPHLLVFPPDLVAEQFTLMDAELFKKVVPYHCLGSIWSQRDKKGKEHLAPTIRATVTQFNSVANCVITTCLGNRSTKAPDRARVVEHWIEVARECRILKNFSSLYAILSALQSNSIHRLKKTWEDVSRDSFRIFQKLSEIFSDENNYSLSRELLIKEGTSKFATLEMNPKRAQKRPKETGIIQGTVPYLGTFLTDLVMLDTAMKDYLYGRLINFEKRRKEFEVIAQIKLLQSACNNYSIAPDEQFGAWFRAVERLSETESYNLSCELEPPSESASNTLRTKKNTAIVKRWSDRQAPSTELSTSGSSHSKSCDQLRCGPYLSSGDIADALSVHSAGSSSSDVEEINISFVPESPDGQEKKFWESASQSSPETSGISSASSSTSSSSASTTPVAATRTHKRSVSGLCNSSSALPLYNQQVGDCCIIRVSLDVDNGNMYKSILVTSQDKAPAVIRKAMDKHNLEEEEPEDYELLQILSDDRKLKIPENANVFYAMNSTANYDFVLKKRTFTKGVKVKHGASSTLPRMKQKGLKIAKGIF.

Positions 112 to 249 constitute an N-terminal Ras-GEF domain; sequence KVRTVKAGTL…RAHLLLAQLE (138 aa). The segment at 280–365 is disordered; sequence ARAPSPVPAP…APVPSLQPSW (86 aa). A compositionally biased stretch (pro residues) spans 282–300; sequence APSPVPAPAPEPEPAPTPA. Positions 304 to 338 are enriched in low complexity; sequence ELEVAPAPAPELQQAPEPAVGLESAPAPALELEPA. A Ras-GEF domain is found at 386-648; the sequence is PPDLVAEQFT…YNLSCELEPP (263 aa). Disordered stretches follow at residues 666 to 689 and 728 to 776; these read KRWSDRQAPSTELSTSGSSHSKSC and PESP…RTHK. 2 stretches are compositionally biased toward low complexity: residues 675 to 686 and 745 to 772; these read STELSTSGSSHS and SSPETSGISSASSSTSSSSASTTPVAAT. In terms of domain architecture, Ras-associating spans 798-885; that stretch reads DCCIIRVSLD…YDFVLKKRTF (88 aa). Tyr814 is modified (phosphotyrosine; by MET).

In terms of assembly, interacts with RIT1 and RIT2. Interacts with OOG1. Interacts with TRAF3. Interacts with HRAS. Phosphorylation of Tyr-814 by MET blocks HRAS binding.

The protein resides in the cytoplasm. Its subcellular location is the nucleus. Functionally, functions as a guanine nucleotide exchange factor (GEF) activating either RalA or RalB GTPases and plays an important role in intracellular transport. Interacts and acts as an effector molecule for R-Ras, H-Ras, K-Ras, and Rap. During bacterial clearance, recognizes 'Lys-33'-linked polyubiquitinated TRAF3 and subsequently mediates assembly of the exocyst complex. This is Ral guanine nucleotide dissociation stimulator (RALGDS) from Homo sapiens (Human).